The sequence spans 258 residues: Alpha- and beta-fibrinogenase stejnefibrase-1 (258 aa).

An N-terminal signal peptide occupies residues 1 to 18 (MELIRVLANLLILQLSYA). Residues 19–24 (QKSSEL) constitute a propeptide that is removed on maturation. Residues 25–249 (IIGGDECNID…HLDWIQNIIA (225 aa)) form the Peptidase S1 domain. Cystine bridges form between cysteine 31/cysteine 163, cysteine 50/cysteine 66, cysteine 98/cysteine 256, cysteine 142/cysteine 210, cysteine 174/cysteine 189, and cysteine 200/cysteine 225. Histidine 65 acts as the Charge relay system in catalysis. The N-linked (GlcNAc...) asparagine glycan is linked to asparagine 103. Aspartate 110 serves as the catalytic Charge relay system. Residues asparagine 121, asparagine 122, asparagine 154, and asparagine 170 are each glycosylated (N-linked (GlcNAc...) asparagine). Serine 204 serves as the catalytic Charge relay system.

Belongs to the peptidase S1 family. Snake venom subfamily. In terms of assembly, monomer. As to expression, expressed by the venom gland.

Its subcellular location is the secreted. Its activity is inhibited by PMSF and p-nitrophenyl-p-guanidinobenzoate (NPGB). In terms of biological role, snake venom serine protease. Degrades concomitantly alpha- (FGA) and beta-chains of fibrinogen (FGB). The sequence is that of Alpha- and beta-fibrinogenase stejnefibrase-1 from Trimeresurus stejnegeri (Chinese green tree viper).